We begin with the raw amino-acid sequence, 213 residues long: MEAIWLYQFRLIVIGDSTVGKSCLIRRFTEGRFAQVSDPTVGVDFFSRLVEIEPGKRIKLQIWDTAGQERFRSITRAYYRNSVGGLLLFDITNRRSFQNVHEWLEETKVHVQPYQIVFVLVGHKCDLDTQRQVTRHEAEKLAAAYGMKYIETSARDAINVEKAFTDLTRDIYELVKRGEITIQEGWEGVKSGFVPNVVHSSEEVVKSERRCLC.

Residues Ser-17, Gly-20, Lys-21, Ser-22, Cys-23, Ser-37, and Thr-40 each contribute to the GTP site. Ser-22 contacts Mg(2+). The switch-I stretch occupies residues 35–43 (QVSDPTVGV). Residues Thr-40 and Asp-64 each coordinate Mg(2+). Residues Gly-67, His-123, Lys-124, Asp-126, Ala-154, and Arg-155 each contribute to the GTP site. The switch-II stretch occupies residues 67–83 (GQERFRSITRAYYRNSV). Ser-201 carries the post-translational modification Phosphoserine. Residues Cys-211 and Cys-213 are each lipidated (S-geranylgeranyl cysteine). At Cys-213 the chain carries Cysteine methyl ester.

This sequence belongs to the small GTPase superfamily. Rab family. As to quaternary structure, interacts (GDP-bound) with C9orf72; C9orf72 in complex with SMCR8 acts as a GEF for RAB39B. Interacts (in GTP-bound form) with PICK1 (via PDZ domain); a PICK1 homodimer may allow simultaneous association of RAB39B and GRIA2 to PICK1 which is involved in GRIA2 trafficking. Interacts with isoform c of RASSF1; the interaction is strong. Interacts with isoform a of RASSF1; the interaction is weak. Interacts with the DLG4/PSD-95. Interacts (GTP-bound) with HOPS complex components VPS39 and VPS41. It depends on Mg(2+) as a cofactor. In terms of tissue distribution, highly expressed in the brain.

The protein resides in the cell membrane. It localises to the cytoplasmic vesicle membrane. The protein localises to the golgi apparatus. Its subcellular location is the cytoplasmic vesicle. It is found in the autophagosome membrane. The protein resides in the autolysosome membrane. It catalyses the reaction GTP + H2O = GDP + phosphate + H(+). Its activity is regulated as follows. Regulated by guanine nucleotide exchange factors (GEFs) including C9orf72-SMCR8 complex, which promote the exchange of bound GDP for free GTP. Regulated by GTPase activating proteins (GAPs) which increase the GTP hydrolysis activity. Inhibited by GDP dissociation inhibitors (GDIs). In terms of biological role, the small GTPases Rab are key regulators of intracellular membrane trafficking, from the formation of transport vesicles to their fusion with membranes. Rabs cycle between an inactive GDP-bound form and an active GTP-bound form that is able to recruit to membranes different sets of downstream effectors directly responsible for vesicle formation, movement, tethering and fusion. RAB39B is involved in autophagy and may function in autophagosome formation. Binds downstream effector PICK1 to ensure selectively GRIA2 exit from the endoplasmic reticulum to the Golgi and to regulate AMPAR composition at the post-synapses and thus synaptic transmission. May regulate the homeostasis of SNCA/alpha-synuclein. This chain is Ras-related protein Rab-39B, found in Homo sapiens (Human).